A 201-amino-acid chain; its full sequence is Large ribosomal subunit protein uL4 (201 aa).

A disordered region spans residues 45–73 (AQKTRAEVTGSGKKPWRQKGTGRARAGSV).

The protein belongs to the universal ribosomal protein uL4 family. In terms of assembly, part of the 50S ribosomal subunit.

Functionally, one of the primary rRNA binding proteins, this protein initially binds near the 5'-end of the 23S rRNA. It is important during the early stages of 50S assembly. It makes multiple contacts with different domains of the 23S rRNA in the assembled 50S subunit and ribosome. Its function is as follows. Forms part of the polypeptide exit tunnel. This is Large ribosomal subunit protein uL4 from Yersinia pseudotuberculosis serotype O:1b (strain IP 31758).